We begin with the raw amino-acid sequence, 208 residues long: Protein GrpE (208 aa).

Basic and acidic residues predominate over residues 1–12; it reads MTNKDESVEKNT. A disordered region spans residues 1 to 49; sequence MTNKDESVEKNTESTVEVTNVKQNIDDSVEQTEESKGHLQDEAIEETSD. The span at 13 to 23 shows a compositional bias: polar residues; the sequence is ESTVEVTNVKQ.

The protein belongs to the GrpE family. As to quaternary structure, homodimer.

It is found in the cytoplasm. In terms of biological role, participates actively in the response to hyperosmotic and heat shock by preventing the aggregation of stress-denatured proteins, in association with DnaK and GrpE. It is the nucleotide exchange factor for DnaK and may function as a thermosensor. Unfolded proteins bind initially to DnaJ; upon interaction with the DnaJ-bound protein, DnaK hydrolyzes its bound ATP, resulting in the formation of a stable complex. GrpE releases ADP from DnaK; ATP binding to DnaK triggers the release of the substrate protein, thus completing the reaction cycle. Several rounds of ATP-dependent interactions between DnaJ, DnaK and GrpE are required for fully efficient folding. This chain is Protein GrpE, found in Staphylococcus aureus (strain bovine RF122 / ET3-1).